We begin with the raw amino-acid sequence, 440 residues long: tRNA(Ile)-lysidine synthase (440 aa).

13-18 (SGGADS) is a binding site for ATP.

It belongs to the tRNA(Ile)-lysidine synthase family.

Its subcellular location is the cytoplasm. It catalyses the reaction cytidine(34) in tRNA(Ile2) + L-lysine + ATP = lysidine(34) in tRNA(Ile2) + AMP + diphosphate + H(+). Ligates lysine onto the cytidine present at position 34 of the AUA codon-specific tRNA(Ile) that contains the anticodon CAU, in an ATP-dependent manner. Cytidine is converted to lysidine, thus changing the amino acid specificity of the tRNA from methionine to isoleucine. This chain is tRNA(Ile)-lysidine synthase, found in Solibacter usitatus (strain Ellin6076).